We begin with the raw amino-acid sequence, 744 residues long: Tripartite motif-containing protein 2 (744 aa).

Serine 10 bears the Phosphoserine mark. The RING-type zinc-finger motif lies at cysteine 23–arginine 64. The B box-type zinc finger occupies glycine 113–leucine 154. Zn(2+)-binding residues include cysteine 118, histidine 121, cysteine 141, and histidine 146. A Filamin repeat occupies threonine 320–valine 421. A Phosphothreonine modification is found at threonine 371. Residues serine 375, serine 424, and serine 428 each carry the phosphoserine modification. The interval glutamate 432–lysine 462 is disordered. 6 NHL repeats span residues isoleucine 473–aspartate 516, lysine 520–aspartate 563, glycine 564–asparagine 605, valine 609–glutamate 652, methionine 656–serine 699, and glycine 700–leucine 743.

The protein belongs to the TRIM/RBCC family. Forms homooligomers. Interacts with TRIM3; this interaction reduces TRIM2 activity. Interacts with myosin V; myosin V may not be a substrate for ubiquitination. Interacts with NEFL. Interacts with phosphorylated BCL2L11. Interacts with SIRPA. In terms of processing, RING-type zinc finger-dependent and UBE2D1-dependent autoubiquitination.

It is found in the cytoplasm. The enzyme catalyses S-ubiquitinyl-[E2 ubiquitin-conjugating enzyme]-L-cysteine + [acceptor protein]-L-lysine = [E2 ubiquitin-conjugating enzyme]-L-cysteine + N(6)-ubiquitinyl-[acceptor protein]-L-lysine.. It participates in protein modification; protein ubiquitination. UBE2D1-dependent E3 ubiquitin-protein ligase that mediates the ubiquitination of NEFL and of phosphorylated BCL2L11. Plays a neuroprotective function. May play a role in neuronal rapid ischemic tolerance. Plays a role in antiviral immunity and limits New World arenavirus infection independently of its ubiquitin ligase activity. This Callithrix jacchus (White-tufted-ear marmoset) protein is Tripartite motif-containing protein 2 (TRIM2).